A 214-amino-acid polypeptide reads, in one-letter code: Osteoclast-stimulating factor 1 (214 aa).

The residue at position 2 (Ser-2) is an N-acetylserine. Positions 12-71 (GQVKVFRALYTFEPRTPDELYFEEGDIIYITDMSDTNWWKGTCKGRTGLIPSNYVAEQAE) constitute an SH3 domain. 3 ANK repeats span residues 72–101 (SIDN…GVNG), 105–135 (AGST…ELNQ), and 139–168 (LGDT…RTDL). Phosphoserine is present on residues Ser-202 and Ser-213.

In terms of assembly, interacts with SRC and SMN1. Interacts with FASLG.

Its subcellular location is the cytoplasm. Its function is as follows. Induces bone resorption, acting probably through a signaling cascade which results in the secretion of factor(s) enhancing osteoclast formation and activity. In Bos taurus (Bovine), this protein is Osteoclast-stimulating factor 1 (OSTF1).